The chain runs to 558 residues: Proline--tRNA ligase (558 aa).

The protein belongs to the class-II aminoacyl-tRNA synthetase family. ProS type 1 subfamily. In terms of assembly, homodimer.

The protein resides in the cytoplasm. The enzyme catalyses tRNA(Pro) + L-proline + ATP = L-prolyl-tRNA(Pro) + AMP + diphosphate. Catalyzes the attachment of proline to tRNA(Pro) in a two-step reaction: proline is first activated by ATP to form Pro-AMP and then transferred to the acceptor end of tRNA(Pro). As ProRS can inadvertently accommodate and process non-cognate amino acids such as alanine and cysteine, to avoid such errors it has two additional distinct editing activities against alanine. One activity is designated as 'pretransfer' editing and involves the tRNA(Pro)-independent hydrolysis of activated Ala-AMP. The other activity is designated 'posttransfer' editing and involves deacylation of mischarged Ala-tRNA(Pro). The misacylated Cys-tRNA(Pro) is not edited by ProRS. The protein is Proline--tRNA ligase of Coprothermobacter proteolyticus (strain ATCC 35245 / DSM 5265 / OCM 4 / BT).